The sequence spans 362 residues: Phosphoserine aminotransferase (362 aa).

L-glutamate contacts are provided by S9 and R42. Residues 76–77 (GR), W102, T153, D174, and Q197 contribute to the pyridoxal 5'-phosphate site. At K198 the chain carries N6-(pyridoxal phosphate)lysine. Residue 239-240 (NT) coordinates pyridoxal 5'-phosphate.

The protein belongs to the class-V pyridoxal-phosphate-dependent aminotransferase family. SerC subfamily. In terms of assembly, homodimer. The cofactor is pyridoxal 5'-phosphate.

It localises to the cytoplasm. It carries out the reaction O-phospho-L-serine + 2-oxoglutarate = 3-phosphooxypyruvate + L-glutamate. The enzyme catalyses 4-(phosphooxy)-L-threonine + 2-oxoglutarate = (R)-3-hydroxy-2-oxo-4-phosphooxybutanoate + L-glutamate. It participates in amino-acid biosynthesis; L-serine biosynthesis; L-serine from 3-phospho-D-glycerate: step 2/3. The protein operates within cofactor biosynthesis; pyridoxine 5'-phosphate biosynthesis; pyridoxine 5'-phosphate from D-erythrose 4-phosphate: step 3/5. Its function is as follows. Catalyzes the reversible conversion of 3-phosphohydroxypyruvate to phosphoserine and of 3-hydroxy-2-oxo-4-phosphonooxybutanoate to phosphohydroxythreonine. This Escherichia coli O6:K15:H31 (strain 536 / UPEC) protein is Phosphoserine aminotransferase.